The following is a 74-amino-acid chain: RRWDRREARRARTAFTYEQLVALENKFKTTRYLSVCERLNLALSLSLTETQVKIWFQNRRTKWKKQNPGLDVIS.

The homeobox DNA-binding region spans 8-67; it reads ARRARTAFTYEQLVALENKFKTTRYLSVCERLNLALSLSLTETQVKIWFQNRRTKWKKQN.

It is found in the nucleus. The chain is Homeobox protein H40 from Apis mellifera (Honeybee).